We begin with the raw amino-acid sequence, 148 residues long: Large ribosomal subunit protein bL9 (148 aa).

The protein belongs to the bacterial ribosomal protein bL9 family.

In terms of biological role, binds to the 23S rRNA. The protein is Large ribosomal subunit protein bL9 of Frankia casuarinae (strain DSM 45818 / CECT 9043 / HFP020203 / CcI3).